A 58-amino-acid polypeptide reads, in one-letter code: UPF0391 membrane protein Sden_3712 (58 aa).

2 helical membrane-spanning segments follow: residues 6–26 (LTFLVIALVAGVLGFTGIAGA) and 27–47 (AAGIAKIIFFVFVVLLLISLV).

It belongs to the UPF0391 family.

Its subcellular location is the cell membrane. The polypeptide is UPF0391 membrane protein Sden_3712 (Shewanella denitrificans (strain OS217 / ATCC BAA-1090 / DSM 15013)).